Consider the following 307-residue polypeptide: MTKAGSKGGNLRDKLDGNELDLSLSDLNEVPVKELAALPKATVLDLSCNKLSTLPSDFCGLTHLVKLDLSKNKLQQLPADFGRLVNLQHLDLLNNRLVTLPVSFAQLKNLKWLDLKDNPLDPVLAKVAGDCLDEKQCKQCANKVLQHMKAVQADQERERQRRLEVEREAEKKREAKQQAKEAKERELRKREKAEEKERRRKEYDAQKASKREQEKKPKKEANQAPKSKSGSRPRKPPPRKHTRSWAVLKVLLLLLLLCVAGGLVVCRVTGLHQQPLCTSVNTIYDNAVQGLRHHEILQWVLQTDSQQ.

Met1 is subject to N-acetylmethionine. Residue Thr2 is modified to N-acetylthreonine; in Leucine-rich repeat-containing protein 59, N-terminally processed. Residues Thr2 to Ser244 are Cytoplasmic-facing. 5 LRR repeats span residues Asn10 to Pro31, Lys40 to Thr62, His63 to Leu84, Asn86 to Leu107, and Asn109 to Ala128. Ser23 and Ser25 each carry phosphoserine. Lys73 bears the N6-succinyllysine mark. Lys135 bears the N6-acetyllysine mark. Positions Met148–Lys216 form a coiled coil. Residues Ala150–His241 are disordered. A compositionally biased stretch (basic and acidic residues) spans Asp154–Ala221. The segment covering Ser229–His241 has biased composition (basic residues). Residues Trp245–Val265 traverse the membrane as a helical segment. Topologically, residues Cys266–Gln307 are lumenal.

Can form homodimers. Interacts with SGO1. Interacts with FGF1.

It localises to the microsome membrane. The protein localises to the endoplasmic reticulum membrane. It is found in the nucleus envelope. Its function is as follows. Required for nuclear import of FGF1, but not that of FGF2. Might regulate nuclear import of exogenous FGF1 by facilitating interaction with the nuclear import machinery and by transporting cytosolic FGF1 to, and possibly through, the nuclear pores. In Mus musculus (Mouse), this protein is Leucine-rich repeat-containing protein 59 (Lrrc59).